A 144-amino-acid chain; its full sequence is Mediator of RNA polymerase II transcription subunit 21 (144 aa).

The protein belongs to the Mediator complex subunit 21 family. In terms of assembly, interacts with PPARG. Component of the Mediator complex, which is composed of MED1, MED4, MED6, MED7, MED8, MED9, MED10, MED11, MED12, MED13, MED13L, MED14, MED15, MED16, MED17, MED18, MED19, MED20, MED21, MED22, MED23, MED24, MED25, MED26, MED27, MED29, MED30, MED31, CCNC, CDK8 and CDC2L6/CDK11. The MED12, MED13, CCNC and CDK8 subunits form a distinct module termed the CDK8 module. Mediator containing the CDK8 module is less active than Mediator lacking this module in supporting transcriptional activation. Individual preparations of the Mediator complex lacking one or more distinct subunits have been variously termed ARC, CRSP, DRIP, PC2, SMCC and TRAP. Interacts with THRA in a ligand-dependent fashion.

It is found in the nucleus. Its function is as follows. Component of the Mediator complex, a coactivator involved in the regulated transcription of nearly all RNA polymerase II-dependent genes. Mediator functions as a bridge to convey information from gene-specific regulatory proteins to the basal RNA polymerase II transcription machinery. Mediator is recruited to promoters by direct interactions with regulatory proteins and serves as a scaffold for the assembly of a functional preinitiation complex with RNA polymerase II and the general transcription factors. The protein is Mediator of RNA polymerase II transcription subunit 21 (MED21) of Homo sapiens (Human).